The primary structure comprises 319 residues: tRNA-cytidine(32) 2-sulfurtransferase (319 aa).

Positions 43 to 48 match the PP-loop motif motif; the sequence is SGGKDS. [4Fe-4S] cluster contacts are provided by Cys118, Cys121, and Cys209.

It belongs to the TtcA family. Homodimer. Requires Mg(2+) as cofactor. The cofactor is [4Fe-4S] cluster.

It is found in the cytoplasm. It catalyses the reaction cytidine(32) in tRNA + S-sulfanyl-L-cysteinyl-[cysteine desulfurase] + AH2 + ATP = 2-thiocytidine(32) in tRNA + L-cysteinyl-[cysteine desulfurase] + A + AMP + diphosphate + H(+). It functions in the pathway tRNA modification. In terms of biological role, catalyzes the ATP-dependent 2-thiolation of cytidine in position 32 of tRNA, to form 2-thiocytidine (s(2)C32). The sulfur atoms are provided by the cysteine/cysteine desulfurase (IscS) system. The polypeptide is tRNA-cytidine(32) 2-sulfurtransferase (Neisseria meningitidis serogroup A / serotype 4A (strain DSM 15465 / Z2491)).